The sequence spans 659 residues: Exoribonuclease 2 (659 aa).

Positions 189-531 (RENLTALHFV…NHRLIKAVLA (343 aa)) constitute an RNB domain. An S1 motif domain is found at 576-658 (NAEFEAEVQD…ATRSIVGEIL (83 aa)).

The protein belongs to the RNR ribonuclease family. RNase II subfamily.

Its subcellular location is the cytoplasm. The enzyme catalyses Exonucleolytic cleavage in the 3'- to 5'-direction to yield nucleoside 5'-phosphates.. In terms of biological role, involved in mRNA degradation. Hydrolyzes single-stranded polyribonucleotides processively in the 3' to 5' direction. This chain is Exoribonuclease 2, found in Haemophilus influenzae (strain PittGG).